The primary structure comprises 297 residues: Juvenile hormone acid O-methyltransferase (297 aa).

The protein belongs to the methyltransferase superfamily. In terms of tissue distribution, predominantly expressed in corpora allata. Also expressed at low level in testis.

It carries out the reaction (2E,6E)-farnesoate + S-adenosyl-L-methionine = methyl (2E,6E)-farnesoate + S-adenosyl-L-homocysteine. The catalysed reaction is juvenile hormone III carboxylate + S-adenosyl-L-methionine = juvenile hormone III + S-adenosyl-L-homocysteine. Its function is as follows. O-methyltransferase that transfers a methyl group from S-adenosyl-L-methionine (SAM) to the carboxyl group of juvenile hormone acids to produce active juvenile hormones in the corpora allata, the last step during juvenile hormone biosynthesis. Also able to methylate farnesoate to methyl farnesoate. The chain is Juvenile hormone acid O-methyltransferase from Drosophila melanogaster (Fruit fly).